A 473-amino-acid chain; its full sequence is Cell division protein FtsP (473 aa).

The tat-type signal signal peptide spans Met-1–Ala-27.

It belongs to the FtsP family. Post-translationally, predicted to be exported by the Tat system. The position of the signal peptide cleavage has not been experimentally proven.

The protein resides in the periplasm. Functionally, cell division protein that is required for growth during stress conditions. May be involved in protecting or stabilizing the divisomal assembly under conditions of stress. This Proteus mirabilis (strain HI4320) protein is Cell division protein FtsP.